The sequence spans 202 residues: Casparian strip membrane protein 4 (202 aa).

The Cytoplasmic portion of the chain corresponds to 1–40 (MKSDSIAVDVPAESSSAIKGKAPLLGLARDHTGSGGYKRG). Residues 41-61 (LSIFDFLLRLAAIVAALAAAA) traverse the membrane as a helical segment. The Extracellular portion of the chain corresponds to 62 to 90 (TMGTSDETLPFFTQFLQFEASYDDLPTFQ). Residues 91–111 (FFVVAIAIVTGYLVLSLPFSV) traverse the membrane as a helical segment. Residues 112–130 (VTIVRPLAVAPRLLLLVLD) lie on the Cytoplasmic side of the membrane. A helical membrane pass occupies residues 131 to 151 (TAALALDTAAASAAAAIVYLA). At 152–176 (HNGNTNTNWLPICQQFGDFCQKTSG) the chain is on the extracellular side. The chain crosses the membrane as a helical span at residues 177 to 197 (AVVSAFASVTFLAILVVISGV). Over 198–202 (SLKRP) the chain is Cytoplasmic.

The protein belongs to the Casparian strip membrane proteins (CASP) family. Homodimer and heterodimers.

Its subcellular location is the cell membrane. Its function is as follows. Regulates membrane-cell wall junctions and localized cell wall deposition. Required for establishment of the Casparian strip membrane domain (CSD) and the subsequent formation of Casparian strips, a cell wall modification of the root endodermis that determines an apoplastic barrier between the intraorganismal apoplasm and the extraorganismal apoplasm and prevents lateral diffusion. In Arabidopsis lyrata subsp. lyrata (Lyre-leaved rock-cress), this protein is Casparian strip membrane protein 4.